The following is a 148-amino-acid chain: MASGTFDIIHPGHGFYLSESKKLGGDNAILMVVVATDKTVKNHKRVPIVGEKQRCEMVSMLKGVDEAYVGDEKDPFKIVKEKKPDIITIGPDQNFNPDSLHKSLLKKGLDIKVVKINDYKKFELDSSCKIIRKIKQTDFDMDYLENCQ.

Residues 5–6 (TF), 10–13 (HPGH), Asp92, and Tyr119 each bind ATP.

The protein belongs to the archaeal FAD synthase family. As to quaternary structure, homodimer. A divalent metal cation serves as cofactor.

It catalyses the reaction FMN + ATP + H(+) = FAD + diphosphate. It functions in the pathway cofactor biosynthesis; FAD biosynthesis; FAD from FMN: step 1/1. Functionally, catalyzes the transfer of the AMP portion of ATP to flavin mononucleotide (FMN) to produce flavin adenine dinucleotide (FAD) coenzyme. The sequence is that of FAD synthase from Methanosphaera stadtmanae (strain ATCC 43021 / DSM 3091 / JCM 11832 / MCB-3).